The sequence spans 492 residues: Cysteine--tRNA ligase (492 aa).

Cys35 contributes to the Zn(2+) binding site. The short motif at 37–47 (PTVYSNVHLGN) is the 'HIGH' region element. Zn(2+) is bound by residues Cys230, His255, and Glu259. A 'KMSKS' region motif is present at residues 287–291 (KMAKS). Lys290 is a binding site for ATP.

It belongs to the class-I aminoacyl-tRNA synthetase family. As to quaternary structure, monomer. Zn(2+) is required as a cofactor.

The protein resides in the cytoplasm. It carries out the reaction tRNA(Cys) + L-cysteine + ATP = L-cysteinyl-tRNA(Cys) + AMP + diphosphate. The protein is Cysteine--tRNA ligase of Flavobacterium johnsoniae (strain ATCC 17061 / DSM 2064 / JCM 8514 / BCRC 14874 / CCUG 350202 / NBRC 14942 / NCIMB 11054 / UW101) (Cytophaga johnsonae).